Here is a 621-residue protein sequence, read N- to C-terminus: Chaperone protein DnaK (621 aa).

A Phosphothreonine; by autocatalysis modification is found at Thr175. Residues 499-516 (EAHEADDKKRKEDAETRN) are compositionally biased toward basic and acidic residues. Disordered regions lie at residues 499-520 (EAHE…NAEN) and 583-621 (AQQG…KDNK). Residues 583-602 (AQQGAEGAAGAADSGSANNG) show a composition bias toward low complexity. Residues 603 to 621 (GDDDVVDAEVVDDDDKDNK) show a composition bias toward acidic residues.

This sequence belongs to the heat shock protein 70 family.

Acts as a chaperone. The chain is Chaperone protein DnaK from Bifidobacterium animalis subsp. lactis (strain AD011).